We begin with the raw amino-acid sequence, 608 residues long: Phosphogluconate dehydratase (608 aa).

The [4Fe-4S] cluster site is built by cysteine 154 and cysteine 221.

The protein belongs to the IlvD/Edd family. It depends on [4Fe-4S] cluster as a cofactor.

The enzyme catalyses 6-phospho-D-gluconate = 2-dehydro-3-deoxy-6-phospho-D-gluconate + H2O. Its pathway is carbohydrate metabolism; Entner-Doudoroff pathway. Functionally, catalyzes the dehydration of 6-phospho-D-gluconate to 2-dehydro-3-deoxy-6-phospho-D-gluconate. The chain is Phosphogluconate dehydratase from Helicobacter pylori (strain J99 / ATCC 700824) (Campylobacter pylori J99).